The following is a 205-amino-acid chain: Glycerol-3-phosphate acyltransferase (205 aa).

Residues 1-3 (MSA) are Periplasmic-facing. A helical membrane pass occupies residues 4-24 (IAPGMILFAYLCGSISSAILV). Residues 25–52 (CRLCGLPDPRTSGSGNPGATNVLRMGGK) are Cytoplasmic-facing. A helical transmembrane segment spans residues 53 to 73 (GAALAVLIFDVLKGMLPVWGA). Residues 74–80 (YELGVSP) lie on the Periplasmic side of the membrane. Residues 81–101 (FWLGLIAIAACLGHIWPIFFG) form a helical membrane-spanning segment. At 102–111 (FKGGKGVATA) the chain is on the cytoplasmic side. The chain crosses the membrane as a helical span at residues 112-132 (FGAIAPIGWDLTGVMAGTWLL). Over 133 to 137 (TVLLS) the chain is Periplasmic. Residues 138 to 158 (GYSSLGAIVSALIAPFYVWWF) traverse the membrane as a helical segment. Residues 159-205 (KPQFTFPVSMLSCLILLRHHDNIQRLWRRQETKIWTKLKRKREKDPE) are Cytoplasmic-facing.

It belongs to the PlsY family. Probably interacts with PlsX.

The protein localises to the cell inner membrane. It catalyses the reaction sn-glycerol 3-phosphate + an acyl-CoA = a 1-acyl-sn-glycero-3-phosphate + CoA. It carries out the reaction a fatty acyl-[ACP] + sn-glycerol 3-phosphate = a 1-acyl-sn-glycero-3-phosphate + holo-[ACP]. It participates in lipid metabolism; phospholipid metabolism. Its function is as follows. Catalyzes the transfer of an acyl group from acyl-ACP to glycerol-3-phosphate (G3P) to form lysophosphatidic acid (LPA). This enzyme can also utilize acyl-CoA as fatty acyl donor, but not acyl-PO(4). The chain is Glycerol-3-phosphate acyltransferase from Escherichia fergusonii (strain ATCC 35469 / DSM 13698 / CCUG 18766 / IAM 14443 / JCM 21226 / LMG 7866 / NBRC 102419 / NCTC 12128 / CDC 0568-73).